Consider the following 153-residue polypeptide: Regulatory protein RecX (153 aa).

The protein belongs to the RecX family.

It localises to the cytoplasm. Modulates RecA activity. The sequence is that of Regulatory protein RecX from Neisseria meningitidis serogroup C / serotype 2a (strain ATCC 700532 / DSM 15464 / FAM18).